We begin with the raw amino-acid sequence, 121 residues long: Large ribosomal subunit protein bL20 (121 aa).

This sequence belongs to the bacterial ribosomal protein bL20 family.

Its function is as follows. Binds directly to 23S ribosomal RNA and is necessary for the in vitro assembly process of the 50S ribosomal subunit. It is not involved in the protein synthesizing functions of that subunit. This is Large ribosomal subunit protein bL20 from Petrotoga mobilis (strain DSM 10674 / SJ95).